A 568-amino-acid polypeptide reads, in one-letter code: Phosphoribosylaminoimidazole carboxylase (568 aa).

Residues 110–298 (KNHLIKHDVA…QFEAHVRAVT (189 aa)) enclose the ATP-grasp domain. 138 to 193 (GEKFGYPYMLKSRTLAYDGRGNFVVKDKSYCEKALEFLKDRPLYAEKWCPFTKELA) serves as a coordination point for ATP.

This sequence in the C-terminal section; belongs to the AIR carboxylase family. Class I subfamily.

It catalyses the reaction 5-amino-1-(5-phospho-D-ribosyl)imidazole-4-carboxylate + H(+) = 5-amino-1-(5-phospho-beta-D-ribosyl)imidazole + CO2. It participates in purine metabolism; IMP biosynthesis via de novo pathway; 5-amino-1-(5-phospho-D-ribosyl)imidazole-4-carboxylate from 5-amino-1-(5-phospho-D-ribosyl)imidazole (carboxylase route): step 1/1. The chain is Phosphoribosylaminoimidazole carboxylase (ADE2) from Candida albicans (strain SC5314 / ATCC MYA-2876) (Yeast).